The following is a 386-amino-acid chain: MVIRRKMNKMIRKGMIGAVMLGAAVAISGGVATAGYIQGTHVKTDLPGPFHITMSPDGSTLFISNQSGHSVTFVDARTQKVTGEVAVRVQPEASAVTPDGAFLYVCNAESDSVSVVDIQRKQEIKEIKVGDWPSGIKISPDGKTAYVACSGCMWNAIDVIDTGRMEKVRSIYTSDYGPRMVEISPDGKTLVAILDTVGSINRSVDFIDIASGRVVENRVIHESSNLRDVVYTPDGKYIAVTHQTPKNWLPVCEAENGQVFTNNVTIIETKAGGKVARLPLDDLNNYDGNPYGMAMDPKGKYLYIGVRGMHRVTILDMDKVLGLVRSSTQEELDYLRDDLGLVRDYLVARVPTGLGPSSVCLSPDGKFCYAANYFSNNVTVIRTAVD.

The signal sequence occupies residues methionine 1 to alanine 34.

Part of the hydrazine synthase complex that forms an elongated dimer of heterotrimers composed of one alpha, one beta and one gamma subunit.

It is found in the anammoxosome. Its pathway is nitrogen metabolism. Its function is as follows. Component of the hydrazine synthase complex that catalyzes the condensation of nitric oxide (NO) with ammonium to form hydrazine. The beta subunit may play a role in modulating transport of the hydroxylamine intermediate through a tunnel between the gamma and alpha subunit's active site. Is involved in anaerobic ammonium oxidation (anammox), a biological process in which nitrite is used as the electron acceptor in the conversion of ammonium to dinitrogen gas (N2) and water; this bacterial process has a major role in the Earth's nitrogen cycle and has been estimated to synthesize up to 50% of the dinitrogen gas emitted into our atmosphere from the oceans. The polypeptide is Hydrazine synthase subunit beta (Kuenenia stuttgartiensis).